Reading from the N-terminus, the 793-residue chain is Calcium permeable stress-gated cation channel 1 (793 aa).

The Lumenal portion of the chain corresponds to 1-21 (MAFNGYGIFDSDPRKNPSSDL). Residues 22-42 (RTQFWLAFLLGASACVFFCFF) form a helical membrane-spanning segment. Over 43–95 (RKRWKVLYAPRTTIEGLNLPTLSSSYYKWLMDLVNIPDDVVQNCAGLDGYVFL) the chain is Cytoplasmic. Residues 96–116 (LFFKMGIKFLSFASLLGVLII) traverse the membrane as a helical segment. At 117–192 (MPVNKHFRGD…IPGLPQPGDG (76 aa)) the chain is on the lumenal side. A helical membrane pass occupies residues 193–213 (FLYLYVLFTYFISIFLLYVLF). The Cytoplasmic portion of the chain corresponds to 214–444 (SSTKSIADIR…HKFFQGWFIT (231 aa)). A helical transmembrane segment spans residues 445 to 465 (LVTFMIILLWTVPVGAIAVFI). Topologically, residues 466–493 (NLDTIRRLWPELGRMIEDLPFLNSLLRT) are lumenal. The chain crosses the membrane as a helical span at residues 494–514 (FLPTLVYSLFISISPFLFRWL). Over 515–534 (SSMQGLSSRAEEEIYAVGKN) the chain is Cytoplasmic. Residues 535–555 (YAYLFVNFFLVYVIAGSTSIW) form a helical membrane-spanning segment. Residues 556–577 (ELAKDTTSFAHFLANRLPHQAQ) are Lumenal-facing. The chain crosses the membrane as a helical span at residues 578-598 (FFIDLIVLQGIGMFPLKLIQL). Over 599–646 (GKLSSYFVRRSFVPYSIASKKFETPDSFSVGIFLPQPMFIMLICLCYS) the chain is Cytoplasmic. A helical membrane pass occupies residues 647–667 (IISPLILVFGLIYFIIGFLVY). Residues 668–687 (KYELIYQMEHPQHSTGELWS) are Lumenal-facing. Residues 688 to 708 (TIFLRMIFGCVIMQLTMMGLM) form a helical membrane-spanning segment. Topologically, residues 709–713 (SLRKA) are cytoplasmic. A helical membrane pass occupies residues 714-734 (YWLSTVIFPLLCFTVISAYNF). The Lumenal segment spans residues 735-793 (STMIRSSMQFVSLYYIRTHQSNTLSSESESRNSESSGSYVHPGFDLSNEELPLIDLNTA). Positions 759–778 (SSESESRNSESSGSYVHPGF) are disordered.

It belongs to the CSC1 (TC 1.A.17) family.

It is found in the vacuole membrane. Acts as an osmosensitive calcium-permeable cation channel. The sequence is that of Calcium permeable stress-gated cation channel 1 from Schizosaccharomyces pombe (strain 972 / ATCC 24843) (Fission yeast).